Here is a 388-residue protein sequence, read N- to C-terminus: Oligogalacturonate lyase (388 aa).

Its subcellular location is the periplasm. It catalyses the reaction 4-(4-deoxy-alpha-D-galact-4-enuronosyl)-D-galacturonate = 2 5-dehydro-4-deoxy-D-glucuronate. Its pathway is glycan metabolism; pectin degradation; 2-dehydro-3-deoxy-D-gluconate from pectin: step 3/5. Involved in degradation of pectin, which causes soft-rod disease in plants. The protein is Oligogalacturonate lyase (ogl) of Dickeya dadantii (strain 3937) (Erwinia chrysanthemi (strain 3937)).